Consider the following 381-residue polypeptide: E3 ubiquitin-protein ligase RNF13 (381 aa).

The N-terminal stretch at 1–34 (MLLSIGMLMLSATQVYTILTVQLFAFLNLLPVEA) is a signal peptide. Over 35-182 (DILAYNFENA…VPELSLPLEY (148 aa)) the chain is Lumenal. The region spanning 64–160 (LKGFLINSKP…GESSANSLKD (97 aa)) is the PA domain. The N-linked (GlcNAc...) asparagine glycan is linked to N88. A helical transmembrane segment spans residues 183-203 (YLIPFLIIVGICLILIVIFMI). At 204–381 (TKFVQDRHRN…EQDYNIANTV (178 aa)) the chain is on the cytoplasmic side. Residues 240–282 (CAICLEEYEDGDKLRILPCSHAYHCKCVDPWLTKTKKTCPVCK) form an RING-type; atypical zinc finger. Residues 285-381 (VVPSQGDSDS…EQDYNIANTV (97 aa)) form a disordered region. The segment covering 317–328 (SARTQSFGSLSE) has biased composition (polar residues). Over residues 339 to 357 (SDYEDDDNEETDSSDADNE) the composition is skewed to acidic residues. A compositionally biased stretch (polar residues) spans 365–381 (VQLQPNGEQDYNIANTV).

Interacts with ERN1. Post-translationally, autoubiquitinated. N-glycosylated and also modified with chondroitin sulfate. As to expression, expressed in the brain, heart, kidney, liver and spleen. Higher expression in adult tissues compared to the embryonic counterparts.

Its subcellular location is the endoplasmic reticulum membrane. The protein resides in the late endosome membrane. The protein localises to the lysosome membrane. It is found in the nucleus inner membrane. The enzyme catalyses S-ubiquitinyl-[E2 ubiquitin-conjugating enzyme]-L-cysteine + [acceptor protein]-L-lysine = [E2 ubiquitin-conjugating enzyme]-L-cysteine + N(6)-ubiquitinyl-[acceptor protein]-L-lysine.. It participates in protein modification; protein ubiquitination. E3 ubiquitin-protein ligase that regulates cell proliferation. Involved in apoptosis regulation. Mediates ER stress-induced activation of JNK signaling pathway and apoptosis by promoting ERN1 activation and splicing of XBP1 mRNA. Also involved in protein trafficking and localization. The polypeptide is E3 ubiquitin-protein ligase RNF13 (Rnf13) (Mus musculus (Mouse)).